A 716-amino-acid chain; its full sequence is Epidermal growth factor receptor kinase substrate 8-like protein 2 (716 aa).

Disordered stretches follow at residues M1–A25 and P182–E243. Positions M46–P202 constitute a PID domain. The segment covering L199–I208 has biased composition (pro residues). Positions G234–E243 are enriched in basic and acidic residues. S240 carries the phosphoserine modification. T304 carries the post-translational modification Phosphothreonine. Positions V449–Y488 are disordered. S450 is modified (phosphoserine). Positions V452–S467 are enriched in polar residues. T470 is modified (phosphothreonine). Residues A493–P552 form the SH3 domain. S571 is modified (phosphoserine).

It belongs to the EPS8 family. In terms of assembly, interacts with ABI1. Part of a complex that contains SOS1, ABI1 and EPS8L2. Associates with F-actin.

Its subcellular location is the cytoplasm. It localises to the cell projection. It is found in the stereocilium. In terms of biological role, stimulates guanine exchange activity of SOS1. May play a role in membrane ruffling and remodeling of the actin cytoskeleton. In the cochlea, is required for stereocilia maintenance in adult hair cells. The sequence is that of Epidermal growth factor receptor kinase substrate 8-like protein 2 (EPS8L2) from Pongo abelii (Sumatran orangutan).